The sequence spans 301 residues: Beta carbonic anhydrase 5, chloroplastic (301 aa).

A chloroplast-targeting transit peptide spans 1-56; it reads MAATPTHFSVSHDPFSSTSLLNLQTQAIFGPNHSLKTTQLRIPASFRRKATNLQVM. Threonine 65 is modified (phosphothreonine). Serine 128 carries the phosphoserine modification. The residue at position 231 (cysteine 231) is an S-nitrosocysteine.

It belongs to the beta-class carbonic anhydrase family. In terms of tissue distribution, strongly expressed in aerial tissues including leaves, stems, flowers and siliques.

The protein resides in the plastid. It is found in the chloroplast. The enzyme catalyses hydrogencarbonate + H(+) = CO2 + H2O. Functionally, reversible hydration of carbon dioxide. This is Beta carbonic anhydrase 5, chloroplastic (BCA5) from Arabidopsis thaliana (Mouse-ear cress).